Consider the following 94-residue polypeptide: Putative testis-specific prion protein (94 aa).

The signal sequence occupies residues 1 to 18 (MQHSLVFFFAVILHLSHL). N-linked (GlcNAc...) asparagine glycosylation occurs at Asn-44.

Specifically expressed in adult testis.

The protein resides in the secreted. In Homo sapiens (Human), this protein is Putative testis-specific prion protein (PRNT).